Consider the following 102-residue polypeptide: UPF0251 protein ASA_1331 (102 aa).

The protein belongs to the UPF0251 family.

The sequence is that of UPF0251 protein ASA_1331 from Aeromonas salmonicida (strain A449).